We begin with the raw amino-acid sequence, 145 residues long: Large ribosomal subunit protein bL9 (145 aa).

The protein belongs to the bacterial ribosomal protein bL9 family.

Binds to the 23S rRNA. This chain is Large ribosomal subunit protein bL9, found in Ureaplasma urealyticum serovar 10 (strain ATCC 33699 / Western).